The primary structure comprises 174 residues: Large ribosomal subunit protein uL5 (174 aa).

This sequence belongs to the universal ribosomal protein uL5 family. Part of the 50S ribosomal subunit; contacts the 5S rRNA and probably tRNA. Forms a bridge to the 30S subunit in the 70S ribosome.

This is one of the proteins that bind and probably mediate the attachment of the 5S RNA into the large ribosomal subunit, where it forms part of the central protuberance. In the 70S ribosome it contacts protein S13 of the 30S subunit (bridge B1b), connecting the 2 subunits; this bridge is implicated in subunit movement. May contact the P site tRNA; the 5S rRNA and some of its associated proteins might help stabilize positioning of ribosome-bound tRNAs. The chain is Large ribosomal subunit protein uL5 from Halorubrum lacusprofundi (strain ATCC 49239 / DSM 5036 / JCM 8891 / ACAM 34).